The primary structure comprises 356 residues: 1-acyl-sn-glycerol-3-phosphate acyltransferase LPAT1, chloroplastic (356 aa).

A chloroplast-targeting transit peptide spans 1–56; that stretch reads MDVASARSISSHPSYYGKPICSSQSSLIRISRDKVCCFGRISNGMTSFTTSLHAVP. A helical membrane pass occupies residues 127–147; the sequence is GIFFCVVAGISATFLIVLMII. An HXXXXD motif motif is present at residues 202 to 207; that stretch reads HQSFLD. Residues 224–244 traverse the membrane as a helical segment; sequence TGIFVIPIIGWAMSMMGVVPL.

Belongs to the 1-acyl-sn-glycerol-3-phosphate acyltransferase family. Widely expressed. Expressed at higher level in leaves. Expressed at lower level in silique walls compared to leaves.

It is found in the plastid. The protein resides in the chloroplast membrane. It catalyses the reaction a fatty acyl-[ACP] + a 1-acyl-sn-glycero-3-phosphate = a 1,2-diacyl-sn-glycero-3-phosphate + holo-[ACP]. It carries out the reaction a 1-acyl-sn-glycero-3-phosphate + an acyl-CoA = a 1,2-diacyl-sn-glycero-3-phosphate + CoA. It functions in the pathway phospholipid metabolism; CDP-diacylglycerol biosynthesis; CDP-diacylglycerol from sn-glycerol 3-phosphate: step 2/3. Functionally, plastidial enzyme of the prokaryotic glycerol-3-phosphate pathway that converts lysophosphatidic acid (LPA) into phosphatidic acid by incorporating an acyl moiety at position sn-2. Utilizes palmitoyl-ACP (16:0-ACP) to produce phosphatidic acid containing a saturated group at position sn-2, which is characteristic of lipids synthesized by the prokaryotic pathway. In vitro, can use 16:0-CoA as acyl donor. Essential for embryo development during the transition from the globular to the heart stage when chloroplasts begin to form. The polypeptide is 1-acyl-sn-glycerol-3-phosphate acyltransferase LPAT1, chloroplastic (Arabidopsis thaliana (Mouse-ear cress)).